We begin with the raw amino-acid sequence, 218 residues long: N-(5'-phosphoribosyl)anthranilate isomerase (218 aa).

Belongs to the TrpF family.

It catalyses the reaction N-(5-phospho-beta-D-ribosyl)anthranilate = 1-(2-carboxyphenylamino)-1-deoxy-D-ribulose 5-phosphate. Its pathway is amino-acid biosynthesis; L-tryptophan biosynthesis; L-tryptophan from chorismate: step 3/5. The polypeptide is N-(5'-phosphoribosyl)anthranilate isomerase (Rhodospirillum rubrum (strain ATCC 11170 / ATH 1.1.1 / DSM 467 / LMG 4362 / NCIMB 8255 / S1)).